Here is a 1062-residue protein sequence, read N- to C-terminus: Exportin-T (1062 aa).

It belongs to the exportin family.

The protein resides in the nucleus. Its subcellular location is the cytoplasm. Its function is as follows. tRNA nucleus export receptor which facilitates tRNA translocation across the nuclear pore complex. Involved in pre-tRNA splicing, probably by affecting the interaction of pre-tRNA with splicing endonuclease. This is Exportin-T (LOS1) from Vanderwaltozyma polyspora (strain ATCC 22028 / DSM 70294 / BCRC 21397 / CBS 2163 / NBRC 10782 / NRRL Y-8283 / UCD 57-17) (Kluyveromyces polysporus).